The sequence spans 230 residues: Large ribosomal subunit protein uL1 (230 aa).

The protein belongs to the universal ribosomal protein uL1 family. Part of the 50S ribosomal subunit.

Binds directly to 23S rRNA. The L1 stalk is quite mobile in the ribosome, and is involved in E site tRNA release. Its function is as follows. Protein L1 is also a translational repressor protein, it controls the translation of the L11 operon by binding to its mRNA. The protein is Large ribosomal subunit protein uL1 of Aster yellows witches'-broom phytoplasma (strain AYWB).